The chain runs to 147 residues: Large ribosomal subunit protein uL11 (147 aa).

This sequence belongs to the universal ribosomal protein uL11 family. As to quaternary structure, part of the ribosomal stalk of the 50S ribosomal subunit. Interacts with L10 and the large rRNA to form the base of the stalk. L10 forms an elongated spine to which L12 dimers bind in a sequential fashion forming a multimeric L10(L12)X complex. One or more lysine residues are methylated.

Functionally, forms part of the ribosomal stalk which helps the ribosome interact with GTP-bound translation factors. This Parabacteroides distasonis (strain ATCC 8503 / DSM 20701 / CIP 104284 / JCM 5825 / NCTC 11152) protein is Large ribosomal subunit protein uL11.